Consider the following 347-residue polypeptide: Probable magnetosome protein Mms36 (347 aa).

The helical transmembrane segment at 25-45 (VLVLYLAIAVVVAVLAWPWLA) threads the bilayer.

The protein localises to the magnetosome membrane. Functionally, the 4 genes of this operon collectively influence magnetosome size and number. The sequence is that of Probable magnetosome protein Mms36 from Magnetospirillum gryphiswaldense (strain DSM 6361 / JCM 21280 / NBRC 15271 / MSR-1).